Reading from the N-terminus, the 126-residue chain is Non-specific lipid-transfer protein 13 (126 aa).

Positions 1 to 20 (MDTHTTKLVAISLLLLLVIS) are cleaved as a signal peptide. Cystine bridges form between C36–C85, C46–C61, C62–C109, and C83–C123.

The protein belongs to the plant LTP family.

Plant non-specific lipid-transfer proteins transfer phospholipids as well as galactolipids across membranes. May play a role in wax or cutin deposition in the cell walls of expanding epidermal cells and certain secretory tissues. This Arabidopsis thaliana (Mouse-ear cress) protein is Non-specific lipid-transfer protein 13 (LTP13).